Reading from the N-terminus, the 158-residue chain is S-ribosylhomocysteine lyase (158 aa).

The Fe cation site is built by His54, His58, and Cys124.

Belongs to the LuxS family. In terms of assembly, homodimer. The cofactor is Fe cation.

The catalysed reaction is S-(5-deoxy-D-ribos-5-yl)-L-homocysteine = (S)-4,5-dihydroxypentane-2,3-dione + L-homocysteine. In terms of biological role, involved in the synthesis of autoinducer 2 (AI-2) which is secreted by bacteria and is used to communicate both the cell density and the metabolic potential of the environment. The regulation of gene expression in response to changes in cell density is called quorum sensing. Catalyzes the transformation of S-ribosylhomocysteine (RHC) to homocysteine (HC) and 4,5-dihydroxy-2,3-pentadione (DPD). The chain is S-ribosylhomocysteine lyase from Lactobacillus gasseri (strain ATCC 33323 / DSM 20243 / BCRC 14619 / CIP 102991 / JCM 1131 / KCTC 3163 / NCIMB 11718 / NCTC 13722 / AM63).